Here is a 308-residue protein sequence, read N- to C-terminus: MIDTSAIRGKLTPNRDLSELTWLRVGGPADWLFQPADIDDLQTFLRMLPADIAVFPMGVGSNLIVRDGGLRAVVIRLGRGFNAIDVAGDTVTAGAAALDAHVARKAADAGVDLTFLRTIPGSIGGAVRMNAGCYGSYTADVFRSAQVVLRSGELATLGAAELNFRYRQSDLPEGAVLVSASLQGVPGDPEALHARMQAQLDKRDQTQPTKERSAGSTFRNPAGFSSTGRADDTHELKAWKVIDEAGMRGARLGGAQMSEMHSNFLINTGGATAADLEGLGEEVRKKVYDTSGITLEWEIMRVGDPLDG.

Residues 24 to 187 (RVGGPADWLF…VSASLQGVPG (164 aa)) enclose the FAD-binding PCMH-type domain. Arginine 167 is an active-site residue. The interval 199–230 (QLDKRDQTQPTKERSAGSTFRNPAGFSSTGRA) is disordered. Residues 200–213 (LDKRDQTQPTKERS) are compositionally biased toward basic and acidic residues. Residues 214 to 228 (AGSTFRNPAGFSSTG) show a composition bias toward polar residues. The Proton donor role is filled by serine 216. Glutamate 298 is a catalytic residue.

Belongs to the MurB family. FAD is required as a cofactor.

The protein localises to the cytoplasm. The enzyme catalyses UDP-N-acetyl-alpha-D-muramate + NADP(+) = UDP-N-acetyl-3-O-(1-carboxyvinyl)-alpha-D-glucosamine + NADPH + H(+). It participates in cell wall biogenesis; peptidoglycan biosynthesis. In terms of biological role, cell wall formation. This is UDP-N-acetylenolpyruvoylglucosamine reductase from Ruegeria pomeroyi (strain ATCC 700808 / DSM 15171 / DSS-3) (Silicibacter pomeroyi).